The following is a 275-amino-acid chain: Axoneme-associated protein mst101(3) (275 aa).

A run of 12 repeats spans residues 64-79 (KKKCAEAAKKEKEAAE), 80-95 (KKKCAEAAKKEKEAAE), 96-111 (KKKCAEAAKKEQEAAQ), 112-127 (KKKCAELAKKEKEAAE), 128-143 (KKKCAEAAKKEKEAAE), 144-159 (RKKCEEAAFKQKCEEA), 160-175 (AKKKKEAKKAAELQQK), 181-196 (KKEKEAEMMKKCEEAA), 197-212 (KKKAAEEAAKKKAEEV), 215-230 (KKKADEAAAKKKCAEA), 231-246 (KKKAEEAALKKMCEEA), and 249-264 (KKMCEEAALQKKCAEA). A 12 X 16 AA tandem repeats of [KRA]-K-[KEM]-[CKA]-[AEKD]-[EA]-[ALE]-[AMK]-[FKAML]-[KQA]-[EQKA]-[KQCEM]-[ECLA]-[AEQ]-[AEQ]-[EQAKV] region spans residues 64–264 (KKKCAEAAKK…AALQKKCAEA (201 aa)).

As to expression, testis.

It is found in the cytoplasm. Functionally, possible structural role in the sperm tail. This is Axoneme-associated protein mst101(3) (mst101(3)) from Drosophila hydei (Fruit fly).